Here is a 217-residue protein sequence, read N- to C-terminus: Thiamine-phosphate synthase (217 aa).

4-amino-2-methyl-5-(diphosphooxymethyl)pyrimidine-binding positions include 42–46 (QFRDK) and Asp77. Mg(2+) is bound by residues Asp78 and Asp97. Residue Ser117 participates in 4-amino-2-methyl-5-(diphosphooxymethyl)pyrimidine binding. 144–146 (TIS) provides a ligand contact to 2-[(2R,5Z)-2-carboxy-4-methylthiazol-5(2H)-ylidene]ethyl phosphate. Lys147 is a 4-amino-2-methyl-5-(diphosphooxymethyl)pyrimidine binding site. Residues Gly175 and 195–196 (IT) contribute to the 2-[(2R,5Z)-2-carboxy-4-methylthiazol-5(2H)-ylidene]ethyl phosphate site.

The protein belongs to the thiamine-phosphate synthase family. Mg(2+) serves as cofactor.

The enzyme catalyses 2-[(2R,5Z)-2-carboxy-4-methylthiazol-5(2H)-ylidene]ethyl phosphate + 4-amino-2-methyl-5-(diphosphooxymethyl)pyrimidine + 2 H(+) = thiamine phosphate + CO2 + diphosphate. It carries out the reaction 2-(2-carboxy-4-methylthiazol-5-yl)ethyl phosphate + 4-amino-2-methyl-5-(diphosphooxymethyl)pyrimidine + 2 H(+) = thiamine phosphate + CO2 + diphosphate. It catalyses the reaction 4-methyl-5-(2-phosphooxyethyl)-thiazole + 4-amino-2-methyl-5-(diphosphooxymethyl)pyrimidine + H(+) = thiamine phosphate + diphosphate. Its pathway is cofactor biosynthesis; thiamine diphosphate biosynthesis; thiamine phosphate from 4-amino-2-methyl-5-diphosphomethylpyrimidine and 4-methyl-5-(2-phosphoethyl)-thiazole: step 1/1. Functionally, condenses 4-methyl-5-(beta-hydroxyethyl)thiazole monophosphate (THZ-P) and 2-methyl-4-amino-5-hydroxymethyl pyrimidine pyrophosphate (HMP-PP) to form thiamine monophosphate (TMP). This is Thiamine-phosphate synthase from Levilactobacillus brevis (strain ATCC 367 / BCRC 12310 / CIP 105137 / JCM 1170 / LMG 11437 / NCIMB 947 / NCTC 947) (Lactobacillus brevis).